The chain runs to 150 residues: MFEEMILEKVRKEAERIAEEQGLEIFDVQYRRESRGWVLRIIIDNPVGYVSVRDCELFSREMERFLDREDFIEHSYTLEVSSPGLDRPLRGPRDYVRFTGKLAKIVTKDGKTFIGRIESFVDGTITISDEKRKYEINIDDVKRANLEVEF.

This sequence belongs to the RimP family.

The protein localises to the cytoplasm. Its function is as follows. Required for maturation of 30S ribosomal subunits. This is Ribosome maturation factor RimP from Thermotoga maritima (strain ATCC 43589 / DSM 3109 / JCM 10099 / NBRC 100826 / MSB8).